The primary structure comprises 403 residues: Phosphopentomutase (403 aa).

6 residues coordinate Mn(2+): D13, D298, H303, D339, H340, and H351.

This sequence belongs to the phosphopentomutase family. The cofactor is Mn(2+).

It localises to the cytoplasm. The catalysed reaction is 2-deoxy-alpha-D-ribose 1-phosphate = 2-deoxy-D-ribose 5-phosphate. It carries out the reaction alpha-D-ribose 1-phosphate = D-ribose 5-phosphate. It participates in carbohydrate degradation; 2-deoxy-D-ribose 1-phosphate degradation; D-glyceraldehyde 3-phosphate and acetaldehyde from 2-deoxy-alpha-D-ribose 1-phosphate: step 1/2. Its function is as follows. Isomerase that catalyzes the conversion of deoxy-ribose 1-phosphate (dRib-1-P) and ribose 1-phosphate (Rib-1-P) to deoxy-ribose 5-phosphate (dRib-5-P) and ribose 5-phosphate (Rib-5-P), respectively. The polypeptide is Phosphopentomutase (Streptococcus pyogenes serotype M3 (strain ATCC BAA-595 / MGAS315)).